We begin with the raw amino-acid sequence, 440 residues long: Probable exopolygalacturonase C (440 aa).

Residues 1–21 form the signal peptide; that stretch reads MLITNPALLGILASLAPLALG. N-linked (GlcNAc...) asparagine glycans are attached at residues N24, N84, N151, and N219. 2 PbH1 repeats span residues 217-238 and 240-261; these read GTNISITDSVMYNGDDAIAVNT and SHNIVFARNTIGYQSHGMSIGS. The active-site Proton donor is the D231. Residue H255 is part of the active site. N271 is a glycosylation site (N-linked (GlcNAc...) asparagine). A PbH1 3 repeat occupies 272-293; that stretch reads ITNLRFEDVTVIDALYAARFKS. Residues N313 and N350 are each glycosylated (N-linked (GlcNAc...) asparagine). An intrachain disulfide couples C389 to C395. An N-linked (GlcNAc...) asparagine glycan is attached at N434.

Belongs to the glycosyl hydrolase 28 family.

It localises to the secreted. The enzyme catalyses [(1-&gt;4)-alpha-D-galacturonosyl](n) + H2O = alpha-D-galacturonate + [(1-&gt;4)-alpha-D-galacturonosyl](n-1). In terms of biological role, specific in hydrolyzing the terminal glycosidic bond of polygalacturonic acid and oligogalacturonates. This Neosartorya fischeri (strain ATCC 1020 / DSM 3700 / CBS 544.65 / FGSC A1164 / JCM 1740 / NRRL 181 / WB 181) (Aspergillus fischerianus) protein is Probable exopolygalacturonase C (pgxC).